The primary structure comprises 98 residues: UPF0235 protein MJ0618 (98 aa).

The protein belongs to the UPF0235 family.

This is UPF0235 protein MJ0618 from Methanocaldococcus jannaschii (strain ATCC 43067 / DSM 2661 / JAL-1 / JCM 10045 / NBRC 100440) (Methanococcus jannaschii).